A 215-amino-acid chain; its full sequence is Ras-related protein Rab-14 (215 aa).

The residue at position 2 (Ala-2) is an N-acetylalanine. GTP is bound by residues Gly-21, Val-22, Gly-23, Lys-24, Ser-25, Cys-26, Ala-38, Asp-39, Cys-40, His-42, and Thr-43. A Mg(2+)-binding site is contributed by Ser-25. The short motif at 42-47 (HTIGVE) is the Switch 1 element. Thr-43 and Asp-66 together coordinate Mg(2+). The Switch 2 signature appears at 68–77 (AGQERFRAVT). GTP contacts are provided by Gly-69, Asn-124, Lys-125, Asp-127, Ala-155, and Lys-156. The tract at residues 188–215 (SGVQHKPSAPQGGRLTSEPQPQREGCGC) is disordered. Residues Cys-213 and Cys-215 are each lipidated (S-geranylgeranyl cysteine). Residue Cys-215 is modified to Cysteine methyl ester.

It belongs to the small GTPase superfamily. Rab family. It depends on Mg(2+) as a cofactor.

Its subcellular location is the recycling endosome. The protein localises to the early endosome membrane. It is found in the golgi apparatus membrane. It localises to the golgi apparatus. The protein resides in the trans-Golgi network membrane. Its subcellular location is the cytoplasmic vesicle. The protein localises to the phagosome. The catalysed reaction is GTP + H2O = GDP + phosphate + H(+). Regulated by guanine nucleotide exchange factors (GEFs) including DENND6A and DENND6B which promote the exchange of bound GDP for free GTP. Regulated by GTPase activating proteins (GAPs) which increase the GTP hydrolysis activity. Inhibited by GDP dissociation inhibitors (GDIs) which prevent Rab-GDP dissociation. Its function is as follows. The small GTPases Rab are key regulators of intracellular membrane trafficking, from the formation of transport vesicles to their fusion with membranes. Rabs cycle between an inactive GDP-bound form and an active GTP-bound form that is able to recruit to membranes different set of downstream effectors directly responsible for vesicle formation, movement, tethering and fusion. Involved in membrane trafficking between the Golgi complex and endosomes during early embryonic development. Regulates the Golgi to endosome transport of FGFR-containing vesicles during early development, a key process for developing basement membrane and epiblast and primitive endoderm lineages during early postimplantation development. May act by modulating the kinesin KIF16B-cargo association to endosomes. Regulates, together with its guanine nucleotide exchange factor DENND6A, the specific endocytic transport of ADAM10, N-cadherin/CDH2 shedding and cell-cell adhesion. Mediates endosomal tethering and fusion through the interaction with RUFY1 and RAB4B. Interaction with RAB11FIP1 may function in the process of neurite formation. This chain is Ras-related protein Rab-14 (RAB14), found in Gallus gallus (Chicken).